A 179-amino-acid chain; its full sequence is Large ribosomal subunit protein uL5 (179 aa).

This sequence belongs to the universal ribosomal protein uL5 family. As to quaternary structure, part of the 50S ribosomal subunit; part of the 5S rRNA/L5/L18/L25 subcomplex. Contacts the 5S rRNA and the P site tRNA. Forms a bridge to the 30S subunit in the 70S ribosome.

Its function is as follows. This is one of the proteins that bind and probably mediate the attachment of the 5S RNA into the large ribosomal subunit, where it forms part of the central protuberance. In the 70S ribosome it contacts protein S13 of the 30S subunit (bridge B1b), connecting the 2 subunits; this bridge is implicated in subunit movement. Contacts the P site tRNA; the 5S rRNA and some of its associated proteins might help stabilize positioning of ribosome-bound tRNAs. This is Large ribosomal subunit protein uL5 from Shewanella sp. (strain ANA-3).